The following is a 186-amino-acid chain: EF-hand protein 5 (186 aa).

Residues 1-23 (MSRSKEVSPNLSQQKRGDVRSAG) form a disordered region. 4 consecutive EF-hand domains span residues 41 to 76 (SAEL…GLHT), 77 to 112 (SEEE…GIDE), 113 to 148 (ASIA…SGEH), and 149 to 186 (SSAE…LNKM). Residues glutamate 98, aspartate 126, and threonine 130 each contribute to the Ca(2+) site.

The sequence is that of EF-hand protein 5 from Leishmania tarentolae (Sauroleishmania tarentolae).